Consider the following 238-residue polypeptide: Expansin-like protein 5 (238 aa).

A signal peptide spans 1-21 (MRINFKLILIILTSFYGIINC). In terms of domain architecture, Expansin-like EG45 spans 45–145 (NGNCGFGKLT…VKVPCRVSGN (101 aa)). Intrachain disulfides connect Cys48–Cys78 and Cys81–Cys140. A glycan (N-linked (GlcNAc...) asparagine) is linked at Asn89.

This sequence belongs to the expansin family. Expansin A subfamily.

The protein localises to the secreted. May serve to lubricate the movement of the cellulose microfibrils during cell growth and wall extension and/or may serve to maintain the fluid state of the slug cell wall. The polypeptide is Expansin-like protein 5 (expl5) (Dictyostelium discoideum (Social amoeba)).